The sequence spans 280 residues: Transcription factor MYB46 (280 aa).

2 HTH myb-type domains span residues 15–67 and 68–122; these read VKKM…INYL and RPDL…KKRL. 2 consecutive DNA-binding regions (H-T-H motif) follow at residues 43–67 and 95–118; these read WSDV…INYL and WSQI…NSTI. The segment at 129 to 150 is disordered; it reads SNLINNSSSSPNTASDSSSNSA.

Expressed at low levels in stems and siliques, specifically in xylem.

The protein resides in the nucleus. Transcription activator. Involved in the regulation of secondary wall biosynthesis in fibers and vessels. Transcription activator of the mannan synthase CSLA9 that recognizes and binds to the DNA consensus sequence 5'-[AG][GT]T[AT]GGT[GA]-3' cis-regulatory element of CSLA9 promoter. Transcription factor that acts as a molecular switch in the NAC012/SND1-mediated transcriptional network regulating secondary wall biosynthesis. Is directly activated by NAC012/SND1. Functions redundantly with MYB83 in the transcriptional regulatory cascade leading to secondary wall formation in fibers and vessels. Transcription activator that binds to the DNA consensus sequence 5'-ACC[AT]A[AC][TC]-3', designated as the secondary wall MYB-responsive element (SMRE). Regulates directly numerous transcription factors and a number of genes involved in secondary wall biosynthesis that contain SMRE elements in their promoters. Is an obligate component of the transcriptional regulatory complex toward the commitment of secondary wall cellulose synthesis. Is required for functional expression of the three secondary wall CESA genes, CESA4, CESA7 and CESA8. The protein is Transcription factor MYB46 of Arabidopsis thaliana (Mouse-ear cress).